Here is a 284-residue protein sequence, read N- to C-terminus: 2-dehydro-3-deoxyphosphooctonate aldolase (284 aa).

Belongs to the KdsA family.

Its subcellular location is the cytoplasm. It carries out the reaction D-arabinose 5-phosphate + phosphoenolpyruvate + H2O = 3-deoxy-alpha-D-manno-2-octulosonate-8-phosphate + phosphate. It participates in carbohydrate biosynthesis; 3-deoxy-D-manno-octulosonate biosynthesis; 3-deoxy-D-manno-octulosonate from D-ribulose 5-phosphate: step 2/3. Its pathway is bacterial outer membrane biogenesis; lipopolysaccharide biosynthesis. This Serratia proteamaculans (strain 568) protein is 2-dehydro-3-deoxyphosphooctonate aldolase.